We begin with the raw amino-acid sequence, 151 residues long: 6,7-dimethyl-8-ribityllumazine synthase (151 aa).

Residues Phe-15, 47-49, and 71-73 each bind 5-amino-6-(D-ribitylamino)uracil; these read TFE and AVI. 76–77 lines the (2S)-2-hydroxy-3-oxobutyl phosphate pocket; sequence ET. Catalysis depends on His-79, which acts as the Proton donor. Leu-104 is a 5-amino-6-(D-ribitylamino)uracil binding site. Arg-119 serves as a coordination point for (2S)-2-hydroxy-3-oxobutyl phosphate.

This sequence belongs to the DMRL synthase family.

The enzyme catalyses (2S)-2-hydroxy-3-oxobutyl phosphate + 5-amino-6-(D-ribitylamino)uracil = 6,7-dimethyl-8-(1-D-ribityl)lumazine + phosphate + 2 H2O + H(+). The protein operates within cofactor biosynthesis; riboflavin biosynthesis; riboflavin from 2-hydroxy-3-oxobutyl phosphate and 5-amino-6-(D-ribitylamino)uracil: step 1/2. Its function is as follows. Catalyzes the formation of 6,7-dimethyl-8-ribityllumazine by condensation of 5-amino-6-(D-ribitylamino)uracil with 3,4-dihydroxy-2-butanone 4-phosphate. This is the penultimate step in the biosynthesis of riboflavin. In Metallosphaera sedula (strain ATCC 51363 / DSM 5348 / JCM 9185 / NBRC 15509 / TH2), this protein is 6,7-dimethyl-8-ribityllumazine synthase.